The following is a 377-amino-acid chain: Probable sensor histidine kinase HK (377 aa).

Disordered regions lie at residues Met-1–Asp-169 and Leu-346–Gln-377. The span at Arg-10–Ser-54 shows a compositional bias: basic residues. Positions Arg-84–Ala-98 are enriched in basic and acidic residues. Composition is skewed to basic residues over residues Ala-99–Asp-115 and Thr-137–Arg-146. The Histidine kinase domain occupies Arg-146–Arg-350. A Phosphohistidine; by autocatalysis modification is found at His-149. Over residues Pro-352–Gln-377 the composition is skewed to basic and acidic residues.

Post-translationally, autophosphorylated.

It carries out the reaction ATP + protein L-histidine = ADP + protein N-phospho-L-histidine.. Its function is as follows. Member of the two-component system HK/TcrA. Phosphorylates TcrA. This is Probable sensor histidine kinase HK from Mycobacterium tuberculosis (strain CDC 1551 / Oshkosh).